The sequence spans 260 residues: 3'-5' ssDNA/RNA exonuclease TatD (260 aa).

The a divalent metal cation site is built by Glu-91, His-127, and His-152.

The protein belongs to the metallo-dependent hydrolases superfamily. TatD-type hydrolase family. TatD subfamily. As to quaternary structure, monomer. Mg(2+) is required as a cofactor.

The protein resides in the cytoplasm. In terms of biological role, 3'-5' exonuclease that prefers single-stranded DNA and RNA. May play a role in the H(2)O(2)-induced DNA damage repair. The chain is 3'-5' ssDNA/RNA exonuclease TatD from Salmonella typhimurium (strain LT2 / SGSC1412 / ATCC 700720).